A 530-amino-acid polypeptide reads, in one-letter code: Meiosis 1 arrest protein (530 aa).

The disordered stretch occupies residues Leu-463–Pro-530. Low complexity predominate over residues Ala-503 to Ala-516.

Its subcellular location is the cytoplasm. Functionally, required for meiosis I progression during spermatogenesis. In Homo sapiens (Human), this protein is Meiosis 1 arrest protein (M1AP).